Reading from the N-terminus, the 122-residue chain is Large ribosomal subunit protein uL14 (122 aa).

It belongs to the universal ribosomal protein uL14 family. As to quaternary structure, part of the 50S ribosomal subunit. Forms a cluster with proteins L3 and L19. In the 70S ribosome, L14 and L19 interact and together make contacts with the 16S rRNA in bridges B5 and B8.

Functionally, binds to 23S rRNA. Forms part of two intersubunit bridges in the 70S ribosome. This Desulfitobacterium hafniense (strain DSM 10664 / DCB-2) protein is Large ribosomal subunit protein uL14.